A 294-amino-acid chain; its full sequence is Acetyl-coenzyme A carboxylase carboxyl transferase subunit beta (294 aa).

The region spanning 25 to 294 (VWTKCTSCEQ…PLVVPVDGSH (270 aa)) is the CoA carboxyltransferase N-terminal domain. The Zn(2+) site is built by Cys-29, Cys-32, Cys-48, and Cys-51. The C4-type zinc finger occupies 29–51 (CTSCEQVLYSAELERNLEVCPKC).

This sequence belongs to the AccD/PCCB family. As to quaternary structure, acetyl-CoA carboxylase is a heterohexamer composed of biotin carboxyl carrier protein (AccB), biotin carboxylase (AccC) and two subunits each of ACCase subunit alpha (AccA) and ACCase subunit beta (AccD). It depends on Zn(2+) as a cofactor.

It is found in the cytoplasm. The catalysed reaction is N(6)-carboxybiotinyl-L-lysyl-[protein] + acetyl-CoA = N(6)-biotinyl-L-lysyl-[protein] + malonyl-CoA. The protein operates within lipid metabolism; malonyl-CoA biosynthesis; malonyl-CoA from acetyl-CoA: step 1/1. In terms of biological role, component of the acetyl coenzyme A carboxylase (ACC) complex. Biotin carboxylase (BC) catalyzes the carboxylation of biotin on its carrier protein (BCCP) and then the CO(2) group is transferred by the transcarboxylase to acetyl-CoA to form malonyl-CoA. In Aliivibrio fischeri (strain MJ11) (Vibrio fischeri), this protein is Acetyl-coenzyme A carboxylase carboxyl transferase subunit beta.